Here is a 377-residue protein sequence, read N- to C-terminus: MAKRDYYEILGVAKNASEAELKKAFRRLAMKHHPDRNPGDKESEEKFKEAKEAYEILTDPQKRAAYDQFGHAGVDPSAGGGARGGASFSDIFEDIFGDIFGGGRGGGSRVYRGSDLQYNLELTLEEAVFGTEVKIRVPSLVECGECHGSGAEKGTTPETCGTCGGVGQVRMQQGFFSVQQTCPRCHGTGKMITHPCKACHGQGRVEEHKTLSVKVPAGVDSGDRIRLSGEGEAGINGGPPGDLYVQIHVKAHKLFTRKGNDLMCEVPISFATAALGGELEIPTLDGRVNLKIPEETQSGRLFRLRAKGVKSVHGGAQGDLICRVSVETPVNLTKRQKELLKELDETMKAGGTRHSPQEEGWLDGVKGFFEDLKFWNK.

The J domain maps to 5-70; sequence DYYEILGVAK…QKRAAYDQFG (66 aa). A CR-type zinc finger spans residues 130–208; sequence GTEVKIRVPS…CHGQGRVEEH (79 aa). Residues cysteine 143, cysteine 146, cysteine 160, cysteine 163, cysteine 182, cysteine 185, cysteine 196, and cysteine 199 each coordinate Zn(2+). CXXCXGXG motif repeat units lie at residues 143 to 150, 160 to 167, 182 to 189, and 196 to 203; these read CGECHGSG, CGTCGGVG, CPRCHGTG, and CKACHGQG.

The protein belongs to the DnaJ family. Homodimer. The cofactor is Zn(2+).

It is found in the cytoplasm. Functionally, participates actively in the response to hyperosmotic and heat shock by preventing the aggregation of stress-denatured proteins and by disaggregating proteins, also in an autonomous, DnaK-independent fashion. Unfolded proteins bind initially to DnaJ; upon interaction with the DnaJ-bound protein, DnaK hydrolyzes its bound ATP, resulting in the formation of a stable complex. GrpE releases ADP from DnaK; ATP binding to DnaK triggers the release of the substrate protein, thus completing the reaction cycle. Several rounds of ATP-dependent interactions between DnaJ, DnaK and GrpE are required for fully efficient folding. Also involved, together with DnaK and GrpE, in the DNA replication of plasmids through activation of initiation proteins. In Thioalkalivibrio sulfidiphilus (strain HL-EbGR7), this protein is Chaperone protein DnaJ.